The following is a 571-amino-acid chain: Urease subunit alpha (571 aa).

Residues 134–571 (GAIDTHIHFI…LPMAQRYFLF (438 aa)) enclose the Urease domain. His-139, His-141, and Lys-222 together coordinate Ni(2+). Residue Lys-222 is modified to N6-carboxylysine. His-224 provides a ligand contact to substrate. Positions 251 and 277 each coordinate Ni(2+). The active-site Proton donor is the His-325. Asp-365 is a binding site for Ni(2+).

The protein belongs to the metallo-dependent hydrolases superfamily. Urease alpha subunit family. In terms of assembly, heterotrimer of UreA (gamma), UreB (beta) and UreC (alpha) subunits. Three heterotrimers associate to form the active enzyme. The cofactor is Ni cation. Carboxylation allows a single lysine to coordinate two nickel ions.

It is found in the cytoplasm. It catalyses the reaction urea + 2 H2O + H(+) = hydrogencarbonate + 2 NH4(+). It functions in the pathway nitrogen metabolism; urea degradation; CO(2) and NH(3) from urea (urease route): step 1/1. This is Urease subunit alpha from Bordetella bronchiseptica (strain ATCC BAA-588 / NCTC 13252 / RB50) (Alcaligenes bronchisepticus).